The following is a 550-amino-acid chain: GMP synthase [glutamine-hydrolyzing] (550 aa).

In terms of domain architecture, Glutamine amidotransferase type-1 spans 39–232; that stretch reads RILILDFGSQ…VHKICGCGGL (194 aa). Cysteine 116 serves as the catalytic Nucleophile. Catalysis depends on residues histidine 206 and glutamate 208. The 193-residue stretch at 233–425 folds into the GMPS ATP-PPase domain; sequence WTPEHIIDLR…LGLPHSMIYR (193 aa). Position 260–266 (260–266) interacts with ATP; the sequence is SGGVDSS.

In terms of assembly, homodimer.

It catalyses the reaction XMP + L-glutamine + ATP + H2O = GMP + L-glutamate + AMP + diphosphate + 2 H(+). The protein operates within purine metabolism; GMP biosynthesis; GMP from XMP (L-Gln route): step 1/1. Functionally, catalyzes the synthesis of GMP from XMP. The sequence is that of GMP synthase [glutamine-hydrolyzing] from Acinetobacter baylyi (strain ATCC 33305 / BD413 / ADP1).